Reading from the N-terminus, the 929-residue chain is Collagen alpha-1(XII) chain (929 aa).

Residues 1-49 enclose the VWFA 1 domain; the sequence is DVEIFAVGVKDAVRSELEAIATPPTATHVYTVEDFDAFQRISFELTQSI. 6 consecutive Fibronectin type-III domains span residues 67–156, 158–250, 251–340, 342–432, 434–521, and 523–613; these read PPRD…LEVR, APRN…VGEP, KNLR…LQER, SPRD…ASPD, KIVK…LSPF, and APRS…TLRD. N-linked (GlcNAc...) asparagine glycosylation occurs at N98. S231, S324, and S415 each carry an O-linked (Xyl...) (chondroitin sulfate) serine glycan. Positions 633–805 constitute a VWFA 2 domain; sequence DIVLLVDGSW…SLLTNIVNDL (173 aa). In terms of domain architecture, Fibronectin type-III 7 spans 821–910; sequence PPSNLVTSEP…AGTETTLPIP (90 aa).

The protein belongs to the fibril-associated collagens with interrupted helices (FACIT) family. Trimer of identical chains each containing 190 kDa of non-triple-helical sequences. Post-translationally, the triple-helical tail is stabilized by disulfide bonds at each end. In terms of processing, prolines at the third position of the tripeptide repeating unit (G-X-Y) are hydroxylated in some or all of the chains.

It localises to the secreted. Its subcellular location is the extracellular space. The protein resides in the extracellular matrix. Its function is as follows. Type XII collagen interacts with type I collagen-containing fibrils, the COL1 domain could be associated with the surface of the fibrils, and the COL2 and NC3 domains may be localized in the perifibrillar matrix. Could play a developmental role in regeneration. The chain is Collagen alpha-1(XII) chain from Notophthalmus viridescens (Eastern newt).